The chain runs to 200 residues: Imidazoleglycerol-phosphate dehydratase (200 aa).

Belongs to the imidazoleglycerol-phosphate dehydratase family.

It is found in the cytoplasm. The catalysed reaction is D-erythro-1-(imidazol-4-yl)glycerol 3-phosphate = 3-(imidazol-4-yl)-2-oxopropyl phosphate + H2O. It functions in the pathway amino-acid biosynthesis; L-histidine biosynthesis; L-histidine from 5-phospho-alpha-D-ribose 1-diphosphate: step 6/9. In Renibacterium salmoninarum (strain ATCC 33209 / DSM 20767 / JCM 11484 / NBRC 15589 / NCIMB 2235), this protein is Imidazoleglycerol-phosphate dehydratase.